The chain runs to 1358 residues: MGIDGETVVLKNMLIGVNLILLGSMLKPSECRLEVTTERAQRQTVEEEGGASSYNTSSKEQPMVFNHVYNINVPLESLCSSGLEASAEQDMSAEDDTLAEYIGQTSDHESQVTFTHKINLPKKACPCASSSQVLQELLSRIEMLEREVSLLRDQCNTNCCQESAATGQLDYVPHCSGHGNFSFESCGCICNEGWFGKNCSEPYCPLGCSSRGVCVDGQCICDSEYSGDDCSELRCPTDCSSRGLCVDGECVCEEPYTGEDCRELRCPGDCSGKGQCANGTCLCQEGYAGEDCSQRRCLNACSGRGHCQEGLCICEEGYQGPDCSAVAPPEDLRVAGISDRSIELEWDGPMAVTEYVISYQPTALGGLQLQQRVPGDWSGVTIMELEPGLTYNISVYAVISNILSLPITAKVATHLSTPQGLQFKTITETTVEVQWEPFSFSFDGWEISFIPKNNEGGVIAQLPSDVTSFNQTGLKPGEEYIVNVVALKEQARSPPTSASVSTVIDGPTQILVRDVSDTVAFVEWTPPRAKVDFILLKYGLVGGEGGKTTFRLQPPLSQYSVQALRPGSRYEVSISAVRGTNESEASSTQFTTEIDAPKNLRVGSRTATSLDLEWDNSEAEAQEYKVVYSTLAGEQYHEVLVPKGIGPTTKTTLTDLVPGTEYGVGISAVMNSKQSIPATMNARTELDSPRDLMVTASSETSISLIWTKASGPIDHYRITFTPSSGISSEVTVPRDRTSYTLTDLEPGAEYIISITAERGRQQSLESTVDAFTGFRPISHLHFSHVTSSSVNITWSDPSPPADRLILNYSPRDKEEDMLEVLLDATKRHAVLMGLQPATEYIVNLVAVHGTVTSEPIVGSITTGIDPPKNITISNVTKDSLTVSWSSPVAPFDYYRVSYRPTQVGRLDSSVVPNTVTEFAITRLYPATEYEISLNSVRGREESERICTLVHTAMDSPMDLIATNITPTEALLQWKAPMGEVENYVIVLTHFAIAGETILVDGVSEEFQLVDLLPSTHYTVTMYATSGPLMSGTIATNFSTLLDPPDNLTASEVTRQSALISWQPPRAAIENYVLTYKSTDGSRKELIVDAEDTWIRLEGLSENTDYTVLLQAAQEATRSSLTSTVFTTGGRVFSHPQDCAQHLMNGDTLSGVYTIFLNGELSHKLQVYCDMTTDGGGWIVFQRRQNGQTDFFRKWADYRVGFGNLEDEFWLGLDNIHRITAQGRYELRVDMRDGQEAVFAYYDKFAVEDSRSLYKIRIGSYNGTAGDSLSYHQGRPFSTEDRDNDVAVTNCAMSYKGAWWYKNCHRTNLNGKYGESRHSQGINWYHWKGHEFSIPFVEMKMRPYIHRLTAGRKRRALKF.

The signal sequence occupies residues 1-31; the sequence is MGIDGETVVLKNMLIGVNLILLGSMLKPSEC. The disordered stretch occupies residues 37–58; sequence TERAQRQTVEEEGGASSYNTSS. N-linked (GlcNAc...) asparagine glycosylation occurs at Asn-55. Residues 127–157 adopt a coiled-coil conformation; that stretch reads CASSSQVLQELLSRIEMLEREVSLLRDQCNT. O-linked (Xyl...) (chondroitin sulfate) serine glycosylation occurs at Ser-176. Residues Asn-180 and Asn-198 are each glycosylated (N-linked (GlcNAc...) asparagine). 3 EGF-like domains span residues 188 to 199, 219 to 230, and 250 to 261; these read CICNEGWFGKNC, CICDSEYSGDDC, and CVCEEPYTGEDC. Residue Ser-271 is glycosylated (O-linked (Xyl...) (chondroitin sulfate) serine). Asn-278 carries an N-linked (GlcNAc...) asparagine glycan. An EGF-like 4 domain is found at 281-292; it reads CLCQEGYAGEDC. 2 disulfides stabilise this stretch: Cys-297-Cys-307 and Cys-314-Cys-323. Residue Ser-302 is glycosylated (O-linked (Xyl...) (chondroitin sulfate) serine). An EGF-like 5 domain is found at 312–323; it reads CICEEGYQGPDC. Fibronectin type-III domains follow at residues 328–420, 421–505, 506–597, 598–687, 688–777, 778–865, 866–955, 956–1042, and 1043–1131; these read PPED…TPQG, LQFK…TVID, GPTQ…IDAP, KNLR…TELD, SPRD…FRPI, SHLH…TGID, PPKN…AMDS, PMDL…TLLD, and PPDN…GGRV. Residues Asn-392, Asn-470, and Asn-581 are each glycosylated (N-linked (GlcNAc...) asparagine). Residue Ser-724 is modified to Phosphoserine. Residues Asn-791, Asn-869, Asn-874, Asn-1036, Asn-1046, and Asn-1261 are each glycosylated (N-linked (GlcNAc...) asparagine). Positions 1129-1344 constitute a Fibrinogen C-terminal domain; it reads GRVFSHPQDC…FVEMKMRPYI (216 aa).

This sequence belongs to the tenascin family. In terms of assembly, interacts with BCAN and ACAN in a calcium-dependent manner. Interacts with SCN2B, PTPRZ1, and CSPG3. Forms oligomers. Isoforms 1 and 2 form respectively trimeric (tribrachion) and dimeric kink-armed rodlike structures, which are linked by disulfide bridges. Interacts with CNTN1, TNC and FN1. Post-translationally, contains N-linked oligosaccharides with a sulfated carbohydrate structures. Contains N-linked oligosaccharides, O-linked sialylated structures and O-linked chondroitin sulfate glycosaminoglycans. In terms of tissue distribution, brain-specific.

It localises to the secreted. Its subcellular location is the extracellular space. It is found in the extracellular matrix. Its function is as follows. Neural extracellular matrix (ECM) protein involved in interactions with different cells and matrix components. Theses interactions can influence cellular behavior by either evoking a stable adhesion and differentiation, or repulsion and inhibition of neurite growth. Binding to cell surface gangliosides inhibits RGD-dependent integrin-mediated cell adhesion and results in an inhibition of PTK2/FAK1 (FAK) phosphorylation and cell detachment. Binding to membrane surface sulfatides results in a oligodendrocyte adhesion and differentiation. Interaction with CNTN1 induces a repulsion of neurons and an inhibition of neurite outgrowth. Interacts with SCN2B may play a crucial role in clustering and regulation of activity of sodium channels at nodes of Ranvier. TNR-linked chondroitin sulfate glycosaminoglycans are involved in the interaction with FN1 and mediates inhibition of cell adhesion and neurite outgrowth. The highly regulated addition of sulfated carbohydrate structure may modulate the adhesive properties of TNR over the course of development and during synapse maintenance. This is Tenascin-R (Tnr) from Mus musculus (Mouse).